The primary structure comprises 657 residues: WD repeat-containing protein 70 (657 aa).

2 disordered regions span residues Met1–Leu21 and Phe43–Arg172. The span at Gln45–Glu78 shows a compositional bias: basic and acidic residues. A compositionally biased stretch (low complexity) spans Pro82 to Asp105. Acidic residues-rich tracts occupy residues Ser106–Leu119 and Glu150–Asn168. WD repeat units lie at residues His183–Lys222, Cys230–Lys271, Gly284–Ser324, Gly333–Phe372, Asp379–Phe418, Pro424–Glu469, and Ile472–Ala511. Lys299 is covalently cross-linked (Glycyl lysine isopeptide (Lys-Gly) (interchain with G-Cter in SUMO2)). Residue Lys455 is modified to N6-acetyllysine. Positions Arg543–Glu568 are enriched in basic and acidic residues. Residues Arg543–Gly584 are disordered. Over residues Pro574–Gly584 the composition is skewed to gly residues. Thr582 bears the Phosphothreonine mark. Residues Lys593 and Lys599 each participate in a glycyl lysine isopeptide (Lys-Gly) (interchain with G-Cter in SUMO2) cross-link. A phosphoserine mark is found at Ser624 and Ser641. The tract at residues Thr634 to Ile657 is disordered. The segment covering Lys647–Ile657 has biased composition (basic and acidic residues).

It belongs to the WD repeat GAD-1 family.

The protein is WD repeat-containing protein 70 (Wdr70) of Mus musculus (Mouse).